We begin with the raw amino-acid sequence, 75 residues long: ATP synthase subunit c (75 aa).

2 helical membrane-spanning segments follow: residues 9–29 (IGAG…GIIF) and 54–74 (FALA…ILFA).

It belongs to the ATPase C chain family. As to quaternary structure, F-type ATPases have 2 components, F(1) - the catalytic core - and F(0) - the membrane proton channel. F(1) has five subunits: alpha(3), beta(3), gamma(1), delta(1), epsilon(1). F(0) has three main subunits: a(1), b(2) and c(10-14). The alpha and beta chains form an alternating ring which encloses part of the gamma chain. F(1) is attached to F(0) by a central stalk formed by the gamma and epsilon chains, while a peripheral stalk is formed by the delta and b chains.

It localises to the cell inner membrane. F(1)F(0) ATP synthase produces ATP from ADP in the presence of a proton or sodium gradient. F-type ATPases consist of two structural domains, F(1) containing the extramembraneous catalytic core and F(0) containing the membrane proton channel, linked together by a central stalk and a peripheral stalk. During catalysis, ATP synthesis in the catalytic domain of F(1) is coupled via a rotary mechanism of the central stalk subunits to proton translocation. Its function is as follows. Key component of the F(0) channel; it plays a direct role in translocation across the membrane. A homomeric c-ring of between 10-14 subunits forms the central stalk rotor element with the F(1) delta and epsilon subunits. This is ATP synthase subunit c from Pelagibacter ubique (strain HTCC1062).